Here is a 197-residue protein sequence, read N- to C-terminus: Rac-like GTP-binding protein RHO1 (197 aa).

13 to 20 contributes to the GTP binding site; that stretch reads GDGAVGKT. The Effector region signature appears at 35-43; sequence YVPTVFDNF. GTP is bound by residues 60 to 64 and 118 to 121; these read DTAGQ and TKLD. A Cysteine methyl ester modification is found at Cys194. A lipid anchor (S-geranylgeranyl cysteine) is attached at Cys194. Positions 195–197 are cleaved as a propeptide — removed in mature form; it reads SIL.

It belongs to the small GTPase superfamily. Rho family.

The protein localises to the cytoplasm. It localises to the membrane. Inactive GDP-bound Rho GTPases reside in the cytosol, are found in a complex with Rho GDP-dissociation inhibitors (Rho GDIs), and are released from the GDI protein in order to translocate to membranes upon activation. The protein is Rac-like GTP-binding protein RHO1 (RHO1) of Beta vulgaris (Sugar beet).